The sequence spans 307 residues: MAKKKIAISCGDIQGVGLELILKSHKEVSAFCEPLYLIDGELLERANQLLHNAYETKTLNTLAIHSPLPLLNSSTIGKVSAQSGAYSFESFKKACELADDKEVDGVCTLPINKLAWQQAQIPFVGHTDFLKQRYKDHQIIMMLGCSKLFVGLFSDHVPLGAVSQLIQVKELVKFLLAFQKSTQAKIVQVCGFNPHAGEEGLFGEEDEKILKAIQKSNQTLGFECFLGPLPADSAFAPNKRKITPFYVSMSHDVGLAPLKALYFDESINVSLNAPILRASTDHGTAFDIAYQNKANNKSYLNAIKYLA.

Residues His-126 and Thr-127 each contribute to the substrate site. Positions 156, 195, and 251 each coordinate a divalent metal cation. The substrate site is built by Lys-259, Asn-268, and Arg-277.

Belongs to the PdxA family. As to quaternary structure, homodimer. It depends on Zn(2+) as a cofactor. Requires Mg(2+) as cofactor. Co(2+) is required as a cofactor.

The protein localises to the cytoplasm. The catalysed reaction is 4-(phosphooxy)-L-threonine + NAD(+) = 3-amino-2-oxopropyl phosphate + CO2 + NADH. The protein operates within cofactor biosynthesis; pyridoxine 5'-phosphate biosynthesis; pyridoxine 5'-phosphate from D-erythrose 4-phosphate: step 4/5. Its function is as follows. Catalyzes the NAD(P)-dependent oxidation of 4-(phosphooxy)-L-threonine (HTP) into 2-amino-3-oxo-4-(phosphooxy)butyric acid which spontaneously decarboxylates to form 3-amino-2-oxopropyl phosphate (AHAP). This Helicobacter pylori (strain HPAG1) protein is 4-hydroxythreonine-4-phosphate dehydrogenase.